The primary structure comprises 455 residues: Membrane-bound lytic murein transglycosylase F (455 aa).

Positions 1–21 (MPKSAVSLFAILLLAASVITA) are cleaved as a signal peptide. Residues 22-264 (CSPQTRPDAM…HIKEQHFGHV (243 aa)) are non-LT domain. The interval 265-455 (KQFNYVTTSL…LKYLDEQGRL (191 aa)) is LT domain. E309 is an active-site residue.

The protein in the N-terminal section; belongs to the bacterial solute-binding protein 3 family. In the C-terminal section; belongs to the transglycosylase Slt family.

It is found in the cell outer membrane. It catalyses the reaction Exolytic cleavage of the (1-&gt;4)-beta-glycosidic linkage between N-acetylmuramic acid (MurNAc) and N-acetylglucosamine (GlcNAc) residues in peptidoglycan, from either the reducing or the non-reducing ends of the peptidoglycan chains, with concomitant formation of a 1,6-anhydrobond in the MurNAc residue.. In terms of biological role, murein-degrading enzyme that degrades murein glycan strands and insoluble, high-molecular weight murein sacculi, with the concomitant formation of a 1,6-anhydromuramoyl product. Lytic transglycosylases (LTs) play an integral role in the metabolism of the peptidoglycan (PG) sacculus. Their lytic action creates space within the PG sacculus to allow for its expansion as well as for the insertion of various structures such as secretion systems and flagella. The protein is Membrane-bound lytic murein transglycosylase F of Idiomarina loihiensis (strain ATCC BAA-735 / DSM 15497 / L2-TR).